The chain runs to 389 residues: Glutamate 5-kinase (389 aa).

Lysine 16 serves as a coordination point for ATP. The substrate site is built by serine 56, aspartate 143, and asparagine 155. ATP is bound at residue 175 to 176; it reads SD. Residues 281–358 enclose the PUA domain; the sequence is AGGLHVDDGA…AEIEAILGYP (78 aa).

This sequence belongs to the glutamate 5-kinase family.

The protein localises to the cytoplasm. It catalyses the reaction L-glutamate + ATP = L-glutamyl 5-phosphate + ADP. The protein operates within amino-acid biosynthesis; L-proline biosynthesis; L-glutamate 5-semialdehyde from L-glutamate: step 1/2. Catalyzes the transfer of a phosphate group to glutamate to form L-glutamate 5-phosphate. This Rhizobium leguminosarum bv. trifolii (strain WSM2304) protein is Glutamate 5-kinase.